The chain runs to 97 residues: Thiosulfate sulfurtransferase/rhodanese-like domain-containing protein 3 (97 aa).

One can recognise a Rhodanese domain in the interval Y32 to K84. K84 carries the post-translational modification N6-succinyllysine.

The sequence is that of Thiosulfate sulfurtransferase/rhodanese-like domain-containing protein 3 (TSTD3) from Homo sapiens (Human).